Here is a 286-residue protein sequence, read N- to C-terminus: Serine carboxypeptidase-like (286 aa).

Ser-4 is an active-site residue. 2 disulfide bridges follow: Cys-83/Cys-98 and Cys-121/Cys-126. The active site involves Asp-193. A substrate-binding site is contributed by Cys-196. An N-linked (GlcNAc...) asparagine glycan is attached at Asn-227. Residue His-250 is part of the active site.

Belongs to the peptidase S10 family.

Its function is as follows. Involved in degradation of small peptides. This Pisum sativum (Garden pea) protein is Serine carboxypeptidase-like.